A 280-amino-acid chain; its full sequence is Vitamin B12-binding protein (280 aa).

The N-terminal stretch at 1 to 27 (MMPLGLFPLPRAAAVLLISLLTLPAQA) is a signal peptide. Positions 30 to 277 (RVISLSPSTT…QMASIPTPVA (248 aa)) constitute a Fe/B12 periplasmic-binding domain. Y57 is a cyanocob(III)alamin binding site. C190 and C266 form a disulfide bridge.

This sequence belongs to the BtuF family. The complex is composed of two ATP-binding proteins (BtuD), two transmembrane proteins (BtuC) and a solute-binding protein (BtuF).

The protein localises to the periplasm. Functionally, part of the ABC transporter complex BtuCDF involved in vitamin B12 import. Binds vitamin B12 and delivers it to the periplasmic surface of BtuC. In Yersinia pseudotuberculosis serotype O:3 (strain YPIII), this protein is Vitamin B12-binding protein.